The following is a 346-amino-acid chain: Holliday junction branch migration complex subunit RuvB (346 aa).

Positions 2–183 (TDDRIIGAGA…FGIVQRLEFY (182 aa)) are large ATPase domain (RuvB-L). ATP is bound by residues I22, R23, G64, K67, T68, T69, 130-132 (EDF), R173, Y183, and R220. Mg(2+) is bound at residue T68. The small ATPAse domain (RuvB-S) stretch occupies residues 184 to 254 (SVEELTRIVR…VAQAAMKMLK (71 aa)). Residues 257–346 (PEGFDELDRR…DLFAEVPDVG (90 aa)) form a head domain (RuvB-H) region. 3 residues coordinate DNA: R293, R312, and R317.

This sequence belongs to the RuvB family. Homohexamer. Forms an RuvA(8)-RuvB(12)-Holliday junction (HJ) complex. HJ DNA is sandwiched between 2 RuvA tetramers; dsDNA enters through RuvA and exits via RuvB. An RuvB hexamer assembles on each DNA strand where it exits the tetramer. Each RuvB hexamer is contacted by two RuvA subunits (via domain III) on 2 adjacent RuvB subunits; this complex drives branch migration. In the full resolvosome a probable DNA-RuvA(4)-RuvB(12)-RuvC(2) complex forms which resolves the HJ.

The protein localises to the cytoplasm. It carries out the reaction ATP + H2O = ADP + phosphate + H(+). The RuvA-RuvB-RuvC complex processes Holliday junction (HJ) DNA during genetic recombination and DNA repair, while the RuvA-RuvB complex plays an important role in the rescue of blocked DNA replication forks via replication fork reversal (RFR). RuvA specifically binds to HJ cruciform DNA, conferring on it an open structure. The RuvB hexamer acts as an ATP-dependent pump, pulling dsDNA into and through the RuvAB complex. RuvB forms 2 homohexamers on either side of HJ DNA bound by 1 or 2 RuvA tetramers; 4 subunits per hexamer contact DNA at a time. Coordinated motions by a converter formed by DNA-disengaged RuvB subunits stimulates ATP hydrolysis and nucleotide exchange. Immobilization of the converter enables RuvB to convert the ATP-contained energy into a lever motion, pulling 2 nucleotides of DNA out of the RuvA tetramer per ATP hydrolyzed, thus driving DNA branch migration. The RuvB motors rotate together with the DNA substrate, which together with the progressing nucleotide cycle form the mechanistic basis for DNA recombination by continuous HJ branch migration. Branch migration allows RuvC to scan DNA until it finds its consensus sequence, where it cleaves and resolves cruciform DNA. This Stenotrophomonas maltophilia (strain R551-3) protein is Holliday junction branch migration complex subunit RuvB.